Consider the following 153-residue polypeptide: UPF0756 membrane protein BA_4840/GBAA_4840/BAS4489 (153 aa).

A run of 4 helical transmembrane segments spans residues 8–28, 54–74, 87–107, and 117–137; these read FLFI…TVAI, LGVT…EIGF, WIAL…VQLL, and LVFG…GPLI.

The protein belongs to the UPF0756 family.

The protein localises to the cell membrane. In Bacillus anthracis, this protein is UPF0756 membrane protein BA_4840/GBAA_4840/BAS4489.